Reading from the N-terminus, the 501-residue chain is NAD(P)H-quinone oxidoreductase subunit 2, chloroplastic (501 aa).

14 consecutive transmembrane segments (helical) span residues 15-35 (ILPE…DLIL), 42-62 (VFFF…IFQL), 82-102 (IFRI…IDFI), 107-127 (LAIT…MFLC), 132-152 (LITI…LSGY), 167-187 (LLIG…LYGL), 210-230 (FGSL…LSLV), 244-264 (PTPV…ALLV), 278-298 (WHSL…LVAI), 307-327 (LAYS…TGNF), 334-354 (IVYL…IILF), 378-398 (FSLA…GFFG), 410-430 (GLYF…YYYL), and 466-486 (VSII…NPII).

The protein belongs to the complex I subunit 2 family. As to quaternary structure, NDH is composed of at least 16 different subunits, 5 of which are encoded in the nucleus.

It is found in the plastid. Its subcellular location is the chloroplast thylakoid membrane. It catalyses the reaction a plastoquinone + NADH + (n+1) H(+)(in) = a plastoquinol + NAD(+) + n H(+)(out). The enzyme catalyses a plastoquinone + NADPH + (n+1) H(+)(in) = a plastoquinol + NADP(+) + n H(+)(out). Functionally, NDH shuttles electrons from NAD(P)H:plastoquinone, via FMN and iron-sulfur (Fe-S) centers, to quinones in the photosynthetic chain and possibly in a chloroplast respiratory chain. The immediate electron acceptor for the enzyme in this species is believed to be plastoquinone. Couples the redox reaction to proton translocation, and thus conserves the redox energy in a proton gradient. The sequence is that of NAD(P)H-quinone oxidoreductase subunit 2, chloroplastic from Physcomitrium patens (Spreading-leaved earth moss).